The sequence spans 238 residues: Pyridoxine 5'-phosphate synthase (238 aa).

N6 contacts 3-amino-2-oxopropyl phosphate. 8 to 9 is a binding site for 1-deoxy-D-xylulose 5-phosphate; that stretch reads DH. Residue R17 participates in 3-amino-2-oxopropyl phosphate binding. Catalysis depends on H42, which acts as the Proton acceptor. 1-deoxy-D-xylulose 5-phosphate contacts are provided by R44 and H49. Catalysis depends on E69, which acts as the Proton acceptor. T99 contacts 1-deoxy-D-xylulose 5-phosphate. H190 serves as the catalytic Proton donor. 3-amino-2-oxopropyl phosphate is bound by residues G191 and 212 to 213; that span reads GH.

This sequence belongs to the PNP synthase family. As to quaternary structure, homooctamer; tetramer of dimers.

The protein localises to the cytoplasm. It carries out the reaction 3-amino-2-oxopropyl phosphate + 1-deoxy-D-xylulose 5-phosphate = pyridoxine 5'-phosphate + phosphate + 2 H2O + H(+). It functions in the pathway cofactor biosynthesis; pyridoxine 5'-phosphate biosynthesis; pyridoxine 5'-phosphate from D-erythrose 4-phosphate: step 5/5. Functionally, catalyzes the complicated ring closure reaction between the two acyclic compounds 1-deoxy-D-xylulose-5-phosphate (DXP) and 3-amino-2-oxopropyl phosphate (1-amino-acetone-3-phosphate or AAP) to form pyridoxine 5'-phosphate (PNP) and inorganic phosphate. The polypeptide is Pyridoxine 5'-phosphate synthase (Chlorobium phaeobacteroides (strain BS1)).